The following is a 174-amino-acid chain: uncharacterized protein (174 aa).

An N-acetyltransferase domain is found at 42–174; it reads SNTKNINLYE…GVKGMFWYPR (133 aa).

Belongs to the acetyltransferase family. Ycf52 subfamily.

Its subcellular location is the plastid. The protein localises to the chloroplast. This is an uncharacterized protein from Porphyra purpurea (Red seaweed).